The chain runs to 195 residues: MARSGRYKVKFRRRREGKTDYMKRLALLKSRKPRVVVRRTNRYIIVQFIGFKGEGDEVIAYAFSKELEKYGWPYGGKNLPAAYLTGYLAAMRAKKAGVTEAILDIGRFPSTKGSRLYAALKGVLDAGIDVPHSPEILPDEDRIRGEHIASFAEKLEEEGSLERQFSDYLRRGADPKIISEAFESVLERISAMSNG.

This sequence belongs to the universal ribosomal protein uL18 family. As to quaternary structure, part of the 50S ribosomal subunit. Contacts the 5S and 23S rRNAs.

Its function is as follows. This is one of the proteins that bind and probably mediate the attachment of the 5S RNA into the large ribosomal subunit, where it forms part of the central protuberance. In Korarchaeum cryptofilum (strain OPF8), this protein is Large ribosomal subunit protein uL18.